The sequence spans 278 residues: Large ribosomal subunit protein uL2 (278 aa).

The disordered stretch occupies residues 202–278; the sequence is ANINDGKAGR…IMRSRHQRKK (77 aa).

It belongs to the universal ribosomal protein uL2 family. In terms of assembly, part of the 50S ribosomal subunit. Forms a bridge to the 30S subunit in the 70S ribosome.

One of the primary rRNA binding proteins. Required for association of the 30S and 50S subunits to form the 70S ribosome, for tRNA binding and peptide bond formation. It has been suggested to have peptidyltransferase activity; this is somewhat controversial. Makes several contacts with the 16S rRNA in the 70S ribosome. This is Large ribosomal subunit protein uL2 from Rhizobium johnstonii (strain DSM 114642 / LMG 32736 / 3841) (Rhizobium leguminosarum bv. viciae).